A 393-amino-acid polypeptide reads, in one-letter code: Probable N-acetyl-LL-diaminopimelate aminotransferase (393 aa).

Position 231 is an N6-(pyridoxal phosphate)lysine (Lys231).

The protein belongs to the class-I pyridoxal-phosphate-dependent aminotransferase family. Homodimer. Pyridoxal 5'-phosphate is required as a cofactor.

The protein resides in the cytoplasm. The enzyme catalyses N-acetyl-(2S,6S)-2,6-diaminopimelate + 2-oxoglutarate = L-2-acetamido-6-oxoheptanedioate + L-glutamate. Its pathway is amino-acid biosynthesis; L-lysine biosynthesis via DAP pathway; LL-2,6-diaminopimelate from (S)-tetrahydrodipicolinate (acetylase route): step 2/3. In terms of biological role, essential for murein biosynthesis. Probably catalyzes the conversion of L-2-acetamido-6-oxopimelate to N-acetyl-LL-2,6-diaminopimelate. This chain is Probable N-acetyl-LL-diaminopimelate aminotransferase, found in Bacillus subtilis (strain 168).